Consider the following 210-residue polypeptide: MSKIVFCDFDGTITAVETFAGMLKEFAPDLSAQIMPQMYARTLSLRRGVRQLLESIPSQKYADIIAYAENKPIRPGLAEFLAFLQEQSIPFIIISGGIQGMIETVLKREGLLDKVTAIYGVNLHTQGEYLQVHSDWENETELVAKALIMDKYSGVETIAIGDSVTDITMARKADLVFARDRLIDYLQAENQPYIPWDNFFEIREYLLLRD.

Belongs to the HAD-like hydrolase superfamily. MtnX family.

It catalyses the reaction 2-hydroxy-5-methylsulfanyl-3-oxopent-1-enyl phosphate + H2O = 1,2-dihydroxy-5-(methylsulfanyl)pent-1-en-3-one + phosphate. The protein operates within amino-acid biosynthesis; L-methionine biosynthesis via salvage pathway; L-methionine from S-methyl-5-thio-alpha-D-ribose 1-phosphate: step 4/6. In terms of biological role, dephosphorylates 2-hydroxy-3-keto-5-methylthiopentenyl-1-phosphate (HK-MTPenyl-1-P) yielding 1,2-dihydroxy-3-keto-5-methylthiopentene (DHK-MTPene). The chain is 2-hydroxy-3-keto-5-methylthiopentenyl-1-phosphate phosphatase from Microcystis aeruginosa.